We begin with the raw amino-acid sequence, 116 residues long: uncharacterized protein (116 aa).

Residues 1 to 21 (MAPSTAMLIMGLLKLPRLRLA) form the signal peptide.

This is an uncharacterized protein from Saccharomyces cerevisiae (strain ATCC 204508 / S288c) (Baker's yeast).